We begin with the raw amino-acid sequence, 378 residues long: Probable dihydroorotase-like protein (378 aa).

The protein belongs to the metallo-dependent hydrolases superfamily. DHOase family. PyrC' subfamily.

Functionally, non-functional DHOase. The protein is Probable dihydroorotase-like protein (pyrC') of Helicobacter pylori (strain J99 / ATCC 700824) (Campylobacter pylori J99).